Reading from the N-terminus, the 55-residue chain is uncharacterized protein (55 aa).

Positions 17 to 44 (QNVNIALTKKRLDTAQQNADQTLKMIQH) form a coiled coil.

This is an uncharacterized protein from Bacillus subtilis (strain 168).